Consider the following 83-residue polypeptide: Cytochrome b559 subunit alpha (83 aa).

A helical transmembrane segment spans residues 21 to 35; it reads VIHSITIPSLFIAGW. His23 contacts heme.

Belongs to the PsbE/PsbF family. In terms of assembly, heterodimer of an alpha subunit and a beta subunit. PSII is composed of 1 copy each of membrane proteins PsbA, PsbB, PsbC, PsbD, PsbE, PsbF, PsbH, PsbI, PsbJ, PsbK, PsbL, PsbM, PsbT, PsbX, PsbY, PsbZ, Psb30/Ycf12, at least 3 peripheral proteins of the oxygen-evolving complex and a large number of cofactors. It forms dimeric complexes. Heme b is required as a cofactor.

The protein localises to the plastid. It is found in the chloroplast thylakoid membrane. Functionally, this b-type cytochrome is tightly associated with the reaction center of photosystem II (PSII). PSII is a light-driven water:plastoquinone oxidoreductase that uses light energy to abstract electrons from H(2)O, generating O(2) and a proton gradient subsequently used for ATP formation. It consists of a core antenna complex that captures photons, and an electron transfer chain that converts photonic excitation into a charge separation. This is Cytochrome b559 subunit alpha from Acorus calamus (Sweet flag).